Here is a 608-residue protein sequence, read N- to C-terminus: MADGVEEGNAVAPRGPARRRGTVRASLDADEFIALMHGSDPVRVELTRLENELRDKERELGEAQTEIRALRLSERAREKAVEELTDELEKMFEKLKLTESLLDSKNLEVKKINDEKKAAMAAQFAAEATLRRVHAAQKDDDMPPIEAILAPLEAELKLARQEIAKLQDDNRALDRLTKQKEAALLDAERTVEIAMAKAAMVDDLQNKNQELMKQIEICHEENKILDKLQRQKVAEVKKLSLTVKELEEAVLRGGATANVVRDYQRQVQEVNDQKKTLECELARAKVTANRVAVVVANEWKDSNDKVMPVKQWLEERRFLQGEMQQLRDKLAVAERTARSEAQLKEKYQLRLKVLEDGLRGPPSGSSRLPTEGKSFSNGPSRRLSLGGADNMSKLSPNGLLARRSPSFHSRSSLSSSSSLVLKHAKGTSKSFDGGTRSLDRSKINGNGAHLLNRSTDAVRDCETNDSWKGNADEGTIENTNSNTDESNKETANNKSAEMVSGFLYDMLQKEVISLRKACHEKDQSLKDKDDAIEMLAKKVDTLTKAMEVEAKKMRREVAAMEKEVAAMRVDKEQEVKARRLGSSKGTGSSQVLSGSRSSSRSGLTRNYQ.

The tract at residues 1-23 is disordered; that stretch reads MADGVEEGNAVAPRGPARRRGTV. Residues 40–346 adopt a coiled-coil conformation; it reads DPVRVELTRL…ARSEAQLKEK (307 aa). Residues 224–458 are required for targeting to microtubules; it reads ILDKLQRQKV…HLLNRSTDAV (235 aa). 2 disordered regions span residues 354–493 and 570–608; these read LEDG…TANN and DKEQ…RNYQ. Polar residues predominate over residues 363-379; the sequence is SGSSRLPTEGKSFSNGP. Over residues 402 to 421 the composition is skewed to low complexity; sequence RRSPSFHSRSSLSSSSSLVL. A compositionally biased stretch (polar residues) spans 476 to 493; that stretch reads IENTNSNTDESNKETANN. Residues 542-576 adopt a coiled-coil conformation; it reads LTKAMEVEAKKMRREVAAMEKEVAAMRVDKEQEVK. Over residues 586–608 the composition is skewed to low complexity; that stretch reads TGSSQVLSGSRSSSRSGLTRNYQ.

The protein belongs to the MAP70 family.

Its subcellular location is the cytoplasm. The protein resides in the cytoskeleton. Functionally, plant-specific protein that interact with microtubules. This chain is Microtubule-associated protein 70-3 (MAP70.3), found in Oryza sativa subsp. japonica (Rice).